A 294-amino-acid chain; its full sequence is MHPRFQTAFAQLADNLQSALEPILADKYFPALLTGEQVSSLKSATGLDEDALAFALLPLAAACALTPLSNFNVGAIARGVSGTWYFGANMEFIGATMQQTVHAEQSAISHAWLSGEKALAAITVNYTPCGHCRQFMNELNSGLDLRIHLPGREAHALRDYLPDAFGPKDLEIKTLLMDEQDHGYALTGDALSQAAIAAANRSHMPYSKSPSGVALECKDGRIFSGSYAENAAFNPTLPPLQGALILLNLKGYDYPDIQRAVLAEKADAPLIQWDATSATLKALGCHSIDRVLLA.

CMP/dCMP-type deaminase domains lie at 48–168 (DEDA…FGPK) and 186–294 (LTGD…VLLA). 89-91 (NME) is a substrate binding site. H102 lines the Zn(2+) pocket. E104 acts as the Proton donor in catalysis. Zn(2+)-binding residues include C129 and C132.

Belongs to the cytidine and deoxycytidylate deaminase family. As to quaternary structure, homodimer. Requires Zn(2+) as cofactor.

It catalyses the reaction cytidine + H2O + H(+) = uridine + NH4(+). It carries out the reaction 2'-deoxycytidine + H2O + H(+) = 2'-deoxyuridine + NH4(+). In terms of biological role, this enzyme scavenges exogenous and endogenous cytidine and 2'-deoxycytidine for UMP synthesis. The polypeptide is Cytidine deaminase (Shigella dysenteriae serotype 1 (strain Sd197)).